We begin with the raw amino-acid sequence, 365 residues long: Phosphoserine aminotransferase (365 aa).

An L-glutamate-binding site is contributed by Arg46. Pyridoxal 5'-phosphate contacts are provided by residues 80-81 (AT), Trp106, Thr157, Asp177, and Gln200. The residue at position 201 (Lys201) is an N6-(pyridoxal phosphate)lysine. Position 242–243 (242–243 (NT)) interacts with pyridoxal 5'-phosphate.

The protein belongs to the class-V pyridoxal-phosphate-dependent aminotransferase family. SerC subfamily. As to quaternary structure, homodimer. Requires pyridoxal 5'-phosphate as cofactor.

Its subcellular location is the cytoplasm. It catalyses the reaction O-phospho-L-serine + 2-oxoglutarate = 3-phosphooxypyruvate + L-glutamate. It carries out the reaction 4-(phosphooxy)-L-threonine + 2-oxoglutarate = (R)-3-hydroxy-2-oxo-4-phosphooxybutanoate + L-glutamate. Its pathway is amino-acid biosynthesis; L-serine biosynthesis; L-serine from 3-phospho-D-glycerate: step 2/3. The protein operates within cofactor biosynthesis; pyridoxine 5'-phosphate biosynthesis; pyridoxine 5'-phosphate from D-erythrose 4-phosphate: step 3/5. Catalyzes the reversible conversion of 3-phosphohydroxypyruvate to phosphoserine and of 3-hydroxy-2-oxo-4-phosphonooxybutanoate to phosphohydroxythreonine. The polypeptide is Phosphoserine aminotransferase (Leptospira biflexa serovar Patoc (strain Patoc 1 / Ames)).